The sequence spans 116 residues: Nucleoid-associated protein A9601_00191 (116 aa).

It belongs to the YbaB/EbfC family. As to quaternary structure, homodimer.

The protein localises to the cytoplasm. The protein resides in the nucleoid. Binds to DNA and alters its conformation. May be involved in regulation of gene expression, nucleoid organization and DNA protection. The polypeptide is Nucleoid-associated protein A9601_00191 (Prochlorococcus marinus (strain AS9601)).